We begin with the raw amino-acid sequence, 78 residues long: Acyl carrier protein (78 aa).

Residues 2 to 77 (SSIEERVKKI…LAINYINENL (76 aa)) form the Carrier domain. O-(pantetheine 4'-phosphoryl)serine is present on serine 37.

The protein belongs to the acyl carrier protein (ACP) family. In terms of processing, 4'-phosphopantetheine is transferred from CoA to a specific serine of apo-ACP by AcpS. This modification is essential for activity because fatty acids are bound in thioester linkage to the sulfhydryl of the prosthetic group.

It localises to the cytoplasm. It participates in lipid metabolism; fatty acid biosynthesis. Carrier of the growing fatty acid chain in fatty acid biosynthesis. In Saccharophagus degradans (strain 2-40 / ATCC 43961 / DSM 17024), this protein is Acyl carrier protein.